A 203-amino-acid chain; its full sequence is Thymidylate kinase (203 aa).

14-21 (GGEGIGKS) lines the ATP pocket.

The protein belongs to the thymidylate kinase family.

It catalyses the reaction dTMP + ATP = dTDP + ADP. Its function is as follows. Phosphorylation of dTMP to form dTDP in both de novo and salvage pathways of dTTP synthesis. This is Thymidylate kinase from Rickettsia peacockii (strain Rustic).